The sequence spans 61 residues: Photosystem II reaction center X protein (61 aa).

The chain crosses the membrane as a helical span at residues 26–46 (IGSFIAAALLIVIPATAFLIF).

It belongs to the PsbX family. Type 2 subfamily. PSII consists of a core antenna complex that captures photons, and an electron transfer chain that converts photonic excitation into a charge separation. PSII forms dimeric complexes.

It is found in the cellular thylakoid membrane. In terms of biological role, involved in the binding and/or turnover of quinones at the Q(B) site of Photosystem II. The chain is Photosystem II reaction center X protein from Prochlorococcus marinus (strain MIT 9301).